The following is a 157-amino-acid chain: NADPH-dependent 7-cyano-7-deazaguanine reductase (157 aa).

Cysteine 56 (thioimide intermediate) is an active-site residue. Aspartate 63 acts as the Proton donor in catalysis. Substrate is bound by residues 78 to 80 and 97 to 98; these read VES and HE.

It belongs to the GTP cyclohydrolase I family. QueF type 1 subfamily.

It localises to the cytoplasm. The catalysed reaction is 7-aminomethyl-7-carbaguanine + 2 NADP(+) = 7-cyano-7-deazaguanine + 2 NADPH + 3 H(+). The protein operates within tRNA modification; tRNA-queuosine biosynthesis. In terms of biological role, catalyzes the NADPH-dependent reduction of 7-cyano-7-deazaguanine (preQ0) to 7-aminomethyl-7-deazaguanine (preQ1). The chain is NADPH-dependent 7-cyano-7-deazaguanine reductase from Parabacteroides distasonis (strain ATCC 8503 / DSM 20701 / CIP 104284 / JCM 5825 / NCTC 11152).